A 1007-amino-acid polypeptide reads, in one-letter code: Exportin-7 (1007 aa).

This sequence belongs to the exportin family.

Its subcellular location is the nucleus. It localises to the cytoplasm. The protein resides in the nuclear pore complex. In terms of biological role, mediates the nuclear export of proteins (cargos) with broad substrate specificity. The chain is Exportin-7 (xpo7) from Dictyostelium discoideum (Social amoeba).